Consider the following 600-residue polypeptide: Putative DNA 3'-5' helicase Rad25 (600 aa).

The Helicase ATP-binding domain maps to 253–402; the sequence is VDRFEDASAG…DIYTLVGRPI (150 aa). Position 266–273 (266–273) interacts with ATP; it reads GPPGSGKT. The short motif at 356-359 is the DEAH box element; it reads DEVH. In terms of domain architecture, Helicase C-terminal spans 457-600; that stretch reads EIEHLVDQHG…VTESDASHSP (144 aa). The interval 569–600 is disordered; that stretch reads RGTEEEDHARSRMRHLSTKGVRVTESDASHSP. Positions 590–600 are enriched in basic and acidic residues; that stretch reads RVTESDASHSP.

The protein belongs to the helicase family. RAD25/XPB subfamily.

It carries out the reaction Couples ATP hydrolysis with the unwinding of duplex DNA by translocating in the 3'-5' direction.. It catalyses the reaction ATP + H2O = ADP + phosphate + H(+). This Halobacterium salinarum (strain ATCC 700922 / JCM 11081 / NRC-1) (Halobacterium halobium) protein is Putative DNA 3'-5' helicase Rad25.